Here is a 543-residue protein sequence, read N- to C-terminus: Ipecac alkaloid beta-glucosidase 3 (543 aa).

A beta-D-glucoside is bound by residues glutamine 36, histidine 140, 185–186, tyrosine 350, glutamate 422, tryptophan 471, and phenylalanine 487; that span reads NE. Residue glutamate 186 is the Proton donor of the active site. Glutamate 422 (nucleophile) is an active-site residue.

This sequence belongs to the glycosyl hydrolase 1 family.

Its subcellular location is the cytoplasm. The protein resides in the cytosol. The enzyme catalyses deacetylipecoside + H2O = deacetylipecoside aglycone + D-glucose. It catalyses the reaction deacetylisoipecoside + H2O = deacetylisoipecoside aglycone + D-glucose. It functions in the pathway alkaloid biosynthesis. Its function is as follows. Beta-glucosidase catalyzing deglucosylation on N-deacetylisoipecoside and N-deacetylipecoside. The protein is Ipecac alkaloid beta-glucosidase 3 of Carapichea ipecacuanha (Ipecac).